A 196-amino-acid chain; its full sequence is Holliday junction branch migration complex subunit RuvA (196 aa).

Residues 1–63 (MYDYIKGTLV…DDAHLLFGFH (63 aa)) form a domain I region. Residues 64–142 (TEDEKEVFLK…ELPAETTNTT (79 aa)) form a domain II region. The tract at residues 143-146 (ANQT) is flexible linker. A domain III region spans residues 147–196 (AGNQQLDEAMEALLALGYKATELKKVKAFFEDTNETAEQYIKSALKMLMK).

This sequence belongs to the RuvA family. Homotetramer. Forms an RuvA(8)-RuvB(12)-Holliday junction (HJ) complex. HJ DNA is sandwiched between 2 RuvA tetramers; dsDNA enters through RuvA and exits via RuvB. An RuvB hexamer assembles on each DNA strand where it exits the tetramer. Each RuvB hexamer is contacted by two RuvA subunits (via domain III) on 2 adjacent RuvB subunits; this complex drives branch migration. In the full resolvosome a probable DNA-RuvA(4)-RuvB(12)-RuvC(2) complex forms which resolves the HJ.

The protein resides in the cytoplasm. In terms of biological role, the RuvA-RuvB-RuvC complex processes Holliday junction (HJ) DNA during genetic recombination and DNA repair, while the RuvA-RuvB complex plays an important role in the rescue of blocked DNA replication forks via replication fork reversal (RFR). RuvA specifically binds to HJ cruciform DNA, conferring on it an open structure. The RuvB hexamer acts as an ATP-dependent pump, pulling dsDNA into and through the RuvAB complex. HJ branch migration allows RuvC to scan DNA until it finds its consensus sequence, where it cleaves and resolves the cruciform DNA. In Streptococcus thermophilus (strain ATCC BAA-491 / LMD-9), this protein is Holliday junction branch migration complex subunit RuvA.